Consider the following 1402-residue polypeptide: Erbin (1402 aa).

LRR repeat units follow at residues T23–F44, T47–C68, S70–L91, N93–C114, V116–L137, N139–T161, K162–L183, Q185–L206, G208–L229, Q231–C252, N254–L275, N277–L298, S300–L321, N323–W344, N346–M367, K369–Q391, and Q392–T413. Phosphoserine is present on residues S440 and S444. 2 disordered regions span residues D465–D489 and D507–S543. The span at E470–L480 shows a compositional bias: basic and acidic residues. Y483 bears the Phosphotyrosine mark. The residue at position 485 (T485) is a Phosphothreonine. Over residues D507–K534 the composition is skewed to basic and acidic residues. 4 positions are modified to phosphoserine: S595, S599, S600, and S617. A compositionally biased stretch (basic and acidic residues) spans N629–D638. The interval N629 to Q694 is disordered. Low complexity predominate over residues N647 to S659. Positions R660–N689 are enriched in polar residues. Phosphoserine occurs at positions 712, 849, 854, and 869. The tract at residues E824–V864 is disordered. T914 is modified (phosphothreonine). At Y917 the chain carries Phosphotyrosine. S928 bears the Phosphoserine mark. At Y970 the chain carries Phosphotyrosine. Disordered stretches follow at residues W990–S1018 and T1070–T1093. Residues T1070 to V1084 show a composition bias toward polar residues. A Phosphotyrosine modification is found at Y1097. Disordered stretches follow at residues G1107 to D1187, A1198 to D1217, and E1222 to H1274. Polar residues-rich tracts occupy residues G1128–P1139 and M1149–R1164. A phosphoserine mark is found at S1150 and S1171. Phosphoserine is present on residues L1231, R1234, and S1276. The region spanning E1311 to V1400 is the PDZ domain.

The protein belongs to the LAP (LRR and PDZ) protein family. Interacts with ERBB2, BPAG1 and ITGB4. May favor the localization of ERBB2, by restricting its presence to the basolateral membrane of epithelial cells. Also found to interact with ARVCF and delta catenin. Interacts (via C-terminus) with DST (via N-terminus). Interacts with NOD2 (via CARD domain). Isoform 2 is phosphorylated on Ser-1231 and Ser-1234.

The protein localises to the cell junction. Its subcellular location is the hemidesmosome. The protein resides in the nucleus membrane. It localises to the basolateral cell membrane. Its function is as follows. Acts as an adapter for the receptor ERBB2, in epithelia. By binding the unphosphorylated ERBB2 'Tyr-1248' receptor, it may contribute to stabilize this unphosphorylated state. Inhibits NOD2-dependent NF-kappa-B signaling and pro-inflammatory cytokine secretion. The chain is Erbin from Mus musculus (Mouse).